Reading from the N-terminus, the 387-residue chain is Probable serine protease FE772_23060 (387 aa).

It belongs to the peptidase S1 family.

Possibly a dedicated protease for substrate gasdermin bGSDM; cleaves the bGSDM precursor, releasing the pore-forming moiety, which integrates into the membrane and triggers cell death. Involved in defense against bacteriophages. When this probable 4 gene operon (bGSDM-FE772_23060-FE772_23065-FE772_23070) is inserted into E.coli it provides nearly 100-fold protection against phages T5 and T6 and about 8-fold against phage T4. The operon without bGSDM no longer protects against phage. In Lysobacter enzymogenes, this protein is Probable serine protease FE772_23060.